The sequence spans 290 residues: Shikimate dehydrogenase (NADP(+)) (290 aa).

Residues 20-22 and Thr67 contribute to the shikimate site; that span reads SLS. Lys71 acts as the Proton acceptor in catalysis. Shikimate-binding residues include Asn92 and Asp107. NADP(+)-binding positions include 130–134 and Leu227; that span reads GAGGA. Tyr229 contacts shikimate. Gly250 serves as a coordination point for NADP(+).

It belongs to the shikimate dehydrogenase family. As to quaternary structure, homodimer.

The catalysed reaction is shikimate + NADP(+) = 3-dehydroshikimate + NADPH + H(+). It participates in metabolic intermediate biosynthesis; chorismate biosynthesis; chorismate from D-erythrose 4-phosphate and phosphoenolpyruvate: step 4/7. Its function is as follows. Involved in the biosynthesis of the chorismate, which leads to the biosynthesis of aromatic amino acids. Catalyzes the reversible NADPH linked reduction of 3-dehydroshikimate (DHSA) to yield shikimate (SA). The sequence is that of Shikimate dehydrogenase (NADP(+)) from Syntrophomonas wolfei subsp. wolfei (strain DSM 2245B / Goettingen).